Consider the following 318-residue polypeptide: MLTKNNSLLSRLPARISFGLKISNKNVNSTYSNVASAYCEGATYKKNGVSRLQNELLSQKTNNETIPVPLQHFIRPAAKHSIFTQIKGYGERSRPEFERPITLEELKSLDYESGKHFVPQSFSDTFAYLIVKGLRAFADLYFQKDYVRRVVVLETVAAIPGMVGGMFRHLYSLRNLEDNGEAIKKLVLEAENERQHLLTFLAVLKPNVLDRMLIKLGQFLFFNGYMVFYFVAPRTAHRFVGYLEEEAVRSYDAFEEEILLGHIKNVEAPRISKDYWNLPEEAMLIDVVRAVRADEAEHRDVNHKMADSKSFSLAHNPY.

A helical membrane pass occupies residues 150–170 (VVVLETVAAIPGMVGGMFRHL). Fe cation is bound by residues glutamate 154, glutamate 193, and histidine 196. A helical transmembrane segment spans residues 212–232 (MLIKLGQFLFFNGYMVFYFVA). The Fe cation site is built by glutamate 244, glutamate 295, and histidine 298.

This sequence belongs to the alternative oxidase family. Found as monomers and homodimers. Requires Fe cation as cofactor.

It localises to the mitosome membrane. It catalyses the reaction 2 a ubiquinol + O2 = 2 a ubiquinone + 2 H2O. In terms of biological role, alternative oxidase which function may be to reoxidize reducing equivalents produced by glycolysis such as ubiquinol. The chain is Ubiquinol oxidase (AOX) from Trachipleistophora hominis (Microsporidian parasite).